A 107-amino-acid chain; its full sequence is Ferredoxin (107 aa).

2 consecutive 4Fe-4S ferredoxin-type domains span residues 2–30 (TYVV…YEGE) and 31–60 (FMLV…PETP). 2 residues coordinate [3Fe-4S] cluster: Cys-9 and Cys-17. [4Fe-4S] cluster-binding residues include Cys-21, Cys-40, Cys-43, and Cys-46. A [3Fe-4S] cluster-binding site is contributed by Cys-50.

It depends on [4Fe-4S] cluster as a cofactor. The cofactor is [3Fe-4S] cluster.

Functionally, ferredoxins are iron-sulfur proteins that transfer electrons in a wide variety of metabolic reactions. In Rickettsia bellii (strain RML369-C), this protein is Ferredoxin (fdxA).